Reading from the N-terminus, the 214-residue chain is ATP synthase subunit a (214 aa).

The next 6 helical transmembrane spans lie at Leu9–Ile29, Ile64–Ile84, Leu88–Ile108, Ser121–Ile141, Leu150–Ser170, and Leu182–Phe202.

It belongs to the ATPase A chain family. F-type ATPases have 2 components, CF(1) - the catalytic core - and CF(0) - the membrane proton channel. CF(1) has five subunits: alpha(3), beta(3), gamma(1), delta(1), epsilon(1). CF(0) has three main subunits: a, b and c.

It localises to the mitochondrion inner membrane. Mitochondrial membrane ATP synthase (F(1)F(0) ATP synthase or Complex V) produces ATP from ADP in the presence of a proton gradient across the membrane which is generated by electron transport complexes of the respiratory chain. F-type ATPases consist of two structural domains, F(1) - containing the extramembraneous catalytic core and F(0) - containing the membrane proton channel, linked together by a central stalk and a peripheral stalk. During catalysis, ATP synthesis in the catalytic domain of F(1) is coupled via a rotary mechanism of the central stalk subunits to proton translocation. Key component of the proton channel; it may play a direct role in the translocation of protons across the membrane. The polypeptide is ATP synthase subunit a (ATP6) (Albinaria caerulea (Land snail)).